The chain runs to 296 residues: Probable 2-(5''-triphosphoribosyl)-3'-dephosphocoenzyme-A synthase (296 aa).

This sequence belongs to the CitG/MdcB family.

The enzyme catalyses 3'-dephospho-CoA + ATP = 2'-(5''-triphospho-alpha-D-ribosyl)-3'-dephospho-CoA + adenine. This is Probable 2-(5''-triphosphoribosyl)-3'-dephosphocoenzyme-A synthase from Streptococcus mutans serotype c (strain ATCC 700610 / UA159).